Consider the following 430-residue polypeptide: MERRRITSARRSYASSETMVRGHGPTRHLGTIPRLSLSRMTPPLPARVDFSLAGALNAGFKETRASERAEMMELNDRFASYIEKVRFLEQQNKALAAELNQLRAKEPTKLADVYQAELRELRLRLDQLTTNSARLEVERDNLTQDLGTLRQKLQDETNLRLEAENNLAVYRQEADEATLARVDLERKVESLEEEIQFLRKIHEEEVRELQEQLAQQQVHVEMDVAKPDLTAALREIRTQYEAVATSNMQETEEWYRSKFADLTDVASRNAELLRQAKHEANDYRRQLQALTCDLESLRGTNESLERQMREQEERHARESASYQEALARLEEEGQSLKEEMARHLQEYQDLLNVKLALDIEIATYRKLLEGEENRITIPVQTFSNLQIRETSLDTKSVSEGHLKRNIVVKTVEMRDGEVIKESKQEHKDVM.

The disordered stretch occupies residues 1–31; the sequence is MERRRITSARRSYASSETMVRGHGPTRHLGT. Positions 1–70 are head; sequence MERRRITSAR…KETRASERAE (70 aa). Thr7 is subject to Phosphothreonine; by AURKB and ROCK1. Residues 9–18 show a composition bias toward polar residues; sequence ARRSYASSET. The residue at position 11 (Arg11) is an Omega-N-methylarginine. Ser12 carries the post-translational modification Phosphoserine. Arg21 is modified (omega-N-methylarginine). Arg34 bears the Citrulline mark. Ser36 is subject to Phosphoserine; by AURKB and ROCK1. Thr41 carries the post-translational modification Phosphothreonine. Positions 67–375 constitute an IF rod domain; that stretch reads ERAEMMELND…KLLEGEENRI (309 aa). The segment at 71–102 is coil 1A; the sequence is MMELNDRFASYIEKVRFLEQQNKALAAELNQL. Phosphoserine is present on Ser80. A linker 1 region spans residues 103–113; that stretch reads RAKEPTKLADV. Phosphothreonine occurs at positions 108 and 148. The interval 114–212 is coil 1B; it reads YQAELRELRL…EEEVRELQEQ (99 aa). Residues 213–228 are linker 12; it reads LAQQQVHVEMDVAKPD. Residues 229–250 form a coil 2A region; that stretch reads LTAALREIRTQYEAVATSNMQE. The linker 2 stretch occupies residues 251–254; that stretch reads TEEW. Residues 255–375 are coil 2B; the sequence is YRSKFADLTD…KLLEGEENRI (121 aa). Residue Ser267 is modified to Phosphoserine. Citrulline is present on Arg268. A Phosphoserine modification is found at Ser321. The interval 376–430 is tail; sequence TIPVQTFSNLQIRETSLDTKSVSEGHLKRNIVVKTVEMRDGEVIKESKQEHKDVM. At Thr381 the chain carries Phosphothreonine. Residue Ser383 is modified to Phosphoserine. Citrulline occurs at positions 404 and 414.

This sequence belongs to the intermediate filament family. Interacts with SYNM. In terms of assembly, interacts with PSEN1 (via N-terminus). Phosphorylated by PKN1. In terms of tissue distribution, expressed in the cortex and hippocampus. Expression decreases following acute and chronic corticosterone treatment.

The protein resides in the cytoplasm. GFAP, a class-III intermediate filament, is a cell-specific marker that, during the development of the central nervous system, distinguishes astrocytes from other glial cells. This is Glial fibrillary acidic protein (Gfap) from Rattus norvegicus (Rat).